The following is a 361-amino-acid chain: Queuine tRNA-ribosyltransferase (361 aa).

Aspartate 89 serves as the catalytic Proton acceptor. Substrate contacts are provided by residues 89 to 93 (DSGGF), aspartate 143, glutamine 185, and glycine 212. The segment at 243–249 (GVGTPED) is RNA binding. Aspartate 262 acts as the Nucleophile in catalysis. Residues 267 to 271 (TRNAR) are RNA binding; important for wobble base 34 recognition. Zn(2+) contacts are provided by cysteine 300, cysteine 302, cysteine 305, and histidine 331.

The protein belongs to the queuine tRNA-ribosyltransferase family. As to quaternary structure, homodimer. Within each dimer, one monomer is responsible for RNA recognition and catalysis, while the other monomer binds to the replacement base PreQ1. It depends on Zn(2+) as a cofactor.

It carries out the reaction 7-aminomethyl-7-carbaguanine + guanosine(34) in tRNA = 7-aminomethyl-7-carbaguanosine(34) in tRNA + guanine. The protein operates within tRNA modification; tRNA-queuosine biosynthesis. In terms of biological role, catalyzes the base-exchange of a guanine (G) residue with the queuine precursor 7-aminomethyl-7-deazaguanine (PreQ1) at position 34 (anticodon wobble position) in tRNAs with GU(N) anticodons (tRNA-Asp, -Asn, -His and -Tyr). Catalysis occurs through a double-displacement mechanism. The nucleophile active site attacks the C1' of nucleotide 34 to detach the guanine base from the RNA, forming a covalent enzyme-RNA intermediate. The proton acceptor active site deprotonates the incoming PreQ1, allowing a nucleophilic attack on the C1' of the ribose to form the product. After dissociation, two additional enzymatic reactions on the tRNA convert PreQ1 to queuine (Q), resulting in the hypermodified nucleoside queuosine (7-(((4,5-cis-dihydroxy-2-cyclopenten-1-yl)amino)methyl)-7-deazaguanosine). This Nitrosomonas eutropha (strain DSM 101675 / C91 / Nm57) protein is Queuine tRNA-ribosyltransferase.